The following is a 565-amino-acid chain: Mitochondrial distribution and morphology protein 34 (565 aa).

The region spanning Met-1 to Leu-195 is the SMP-LTD domain. Disordered stretches follow at residues Glu-207–Leu-236, Pro-296–Thr-317, and Ser-348–Pro-504. Residues Arg-358–Arg-370 are compositionally biased toward basic residues. Residues Val-371–Glu-381 show a composition bias toward basic and acidic residues. Positions Ser-382–Ser-401 are enriched in polar residues. Basic and acidic residues-rich tracts occupy residues Leu-446–Val-472 and Ile-483–Glu-496.

The protein belongs to the MDM34 family. Component of the ER-mitochondria encounter structure (ERMES) or MDM complex, composed of mmm1, mdm10, mdm12 and mdm34.

The protein localises to the mitochondrion outer membrane. Functionally, component of the ERMES/MDM complex, which serves as a molecular tether to connect the endoplasmic reticulum (ER) and mitochondria. Components of this complex are involved in the control of mitochondrial shape and protein biogenesis, and function in nonvesicular lipid trafficking between the ER and mitochondria. Mdm34 is required for the interaction of the ER-resident membrane protein mmm1 and the outer mitochondrial membrane-resident beta-barrel protein mdm10. This is Mitochondrial distribution and morphology protein 34 from Aspergillus terreus (strain NIH 2624 / FGSC A1156).